The following is a 667-amino-acid chain: DNA ligase (667 aa).

NAD(+) is bound by residues aspartate 32–aspartate 36, serine 81–leucine 82, and glutamate 110. Lysine 112 acts as the N6-AMP-lysine intermediate in catalysis. 4 residues coordinate NAD(+): arginine 133, glutamate 167, lysine 283, and lysine 307. Zn(2+)-binding residues include cysteine 401, cysteine 404, cysteine 419, and cysteine 424. A BRCT domain is found at glutamate 586–serine 667.

This sequence belongs to the NAD-dependent DNA ligase family. LigA subfamily. It depends on Mg(2+) as a cofactor. Requires Mn(2+) as cofactor.

It catalyses the reaction NAD(+) + (deoxyribonucleotide)n-3'-hydroxyl + 5'-phospho-(deoxyribonucleotide)m = (deoxyribonucleotide)n+m + AMP + beta-nicotinamide D-nucleotide.. Its function is as follows. DNA ligase that catalyzes the formation of phosphodiester linkages between 5'-phosphoryl and 3'-hydroxyl groups in double-stranded DNA using NAD as a coenzyme and as the energy source for the reaction. It is essential for DNA replication and repair of damaged DNA. The polypeptide is DNA ligase (Staphylococcus aureus (strain MRSA252)).